Consider the following 137-residue polypeptide: Profilin-3 (137 aa).

It belongs to the profilin family. As to quaternary structure, interacts with ACTRT3.

Its subcellular location is the cytoplasm. It is found in the cytoskeleton. The protein resides in the nucleus. Functionally, binds to actin and affects the structure of the cytoskeleton. Binds to poly-L-proline, phosphatidylinositol 3-phosphate (PtdIns(3)P), phosphatidylinositol 4,5-bisphosphate (PtdIns(4,5)P2) and phosphatidylinositol 4-phosphate (PtdIns(4)P). Slightly reduces actin polymerization. May be involved in spermatogenesis. This is Profilin-3 (PFN3) from Bos taurus (Bovine).